We begin with the raw amino-acid sequence, 397 residues long: CCA-adding enzyme (397 aa).

2 residues coordinate ATP: G26 and R29. Positions 26 and 29 each coordinate CTP. Residues D39 and D41 each coordinate Mg(2+). Positions 110, 153, 156, 159, and 162 each coordinate ATP. Residues R110, D153, R156, R159, and R162 each contribute to the CTP site.

It belongs to the tRNA nucleotidyltransferase/poly(A) polymerase family. Bacterial CCA-adding enzyme type 3 subfamily. Homodimer. Mg(2+) is required as a cofactor.

It catalyses the reaction a tRNA precursor + 2 CTP + ATP = a tRNA with a 3' CCA end + 3 diphosphate. It carries out the reaction a tRNA with a 3' CCA end + 2 CTP + ATP = a tRNA with a 3' CCACCA end + 3 diphosphate. Functionally, catalyzes the addition and repair of the essential 3'-terminal CCA sequence in tRNAs without using a nucleic acid template. Adds these three nucleotides in the order of C, C, and A to the tRNA nucleotide-73, using CTP and ATP as substrates and producing inorganic pyrophosphate. tRNA 3'-terminal CCA addition is required both for tRNA processing and repair. Also involved in tRNA surveillance by mediating tandem CCA addition to generate a CCACCA at the 3' terminus of unstable tRNAs. While stable tRNAs receive only 3'-terminal CCA, unstable tRNAs are marked with CCACCA and rapidly degraded. The polypeptide is CCA-adding enzyme (Bacillus cereus (strain B4264)).